An 842-amino-acid polypeptide reads, in one-letter code: MutS protein homolog him-14 (842 aa).

The disordered stretch occupies residues 1–21 (MYSNKSFQRRQRQQVAESRSE). ATP is bound at residue 588–595 (GPNMAGKS).

This sequence belongs to the DNA mismatch repair MutS family. As to quaternary structure, heterooligomer of him-14 and msh-5.

The protein resides in the nucleus. Required during the pachytene stage of meiotic prophase for the formation of crossovers between homologous chromosomes. Together with msh-5 and zhp-3 plays a role in the activation of DNA damage-dependent apoptosis at the DNA damage checkpoint in pachytene cells. Not needed for pairing or synapsis. May promote crossing over by interfering with Holliday junction branch migration. Has no apparent role in DNA mismatch repair. The polypeptide is MutS protein homolog him-14 (Caenorhabditis elegans).